Here is a 1153-residue protein sequence, read N- to C-terminus: PPi-type phosphoenolpyruvate carboxykinase 2 (1153 aa).

Positions 1085-1131 form a coiled coil; sequence RQKLEVAKLNKDLAYLNKTIAEKPRLVETLNKQIAAVKEELQYVSSE.

It belongs to the PPi-type phosphoenolpyruvate carboxykinase family. As to quaternary structure, monomer and trimer; forms heterotrimers with PEPCK1 and PEPCK3.

The protein resides in the cytoplasm. It localises to the cytosol. The catalysed reaction is oxaloacetate + diphosphate = phosphoenolpyruvate + phosphate + CO2. Its function is as follows. Inorganic pyrophosphate (PPi)-dependent phosphoenolpyruvate carboxykinase, which regulates the carbon flow of the central metabolism by fixing CO(2) to phosphoenolpyruvate to produce oxaloacetate. Can also produce pyruvate and diphosphate from phosphoenolpyruvate and phosphate. This Entamoeba histolytica (strain ATCC 30459 / HM-1:IMSS / ABRM) protein is PPi-type phosphoenolpyruvate carboxykinase 2.